The chain runs to 620 residues: Phosphopentomutase (620 aa).

Alpha-D-glucose 1,6-bisphosphate-binding residues include arginine 71 and serine 173. Catalysis depends on serine 173, which acts as the Phosphoserine intermediate. Mg(2+)-binding residues include serine 173, aspartate 330, aspartate 332, and aspartate 334. Residue serine 173 is modified to Phosphoserine. Alpha-D-glucose 1,6-bisphosphate contacts are provided by aspartate 334, arginine 335, threonine 408, glutamate 432, and lysine 446.

Belongs to the phosphohexose mutase family. In terms of assembly, monomer. Mg(2+) serves as cofactor. As to expression, highly expressed in lung, spleen and thymus. Expressed at lower levels in liver, brain, kidney, skeletal muscle, testis and heart.

It is found in the cytoplasm. The protein localises to the cytosol. The enzyme catalyses alpha-D-ribose 1-phosphate = D-ribose 5-phosphate. It carries out the reaction 2-deoxy-alpha-D-ribose 1-phosphate = 2-deoxy-D-ribose 5-phosphate. The catalysed reaction is alpha-D-glucose 1-phosphate = alpha-D-glucose 6-phosphate. It catalyses the reaction O-phospho-L-seryl-[protein] + alpha-D-glucose 1-phosphate = alpha-D-glucose 1,6-bisphosphate + L-seryl-[protein]. The enzyme catalyses alpha-D-glucose 1,6-bisphosphate + L-seryl-[protein] = O-phospho-L-seryl-[protein] + alpha-D-glucose 6-phosphate. Functionally, catalyzes the conversion of the nucleoside breakdown products ribose-1-phosphate and deoxyribose-1-phosphate to the corresponding 5-phosphopentoses. Catalyzes the reversible isomerization of alpha-D-glucose 1-phosphate to alpha-D-glucose 6-phosphate but with a lower catalytic efficiency. The mechanism proceeds via the intermediate compound alpha-D-glucose 1,6-bisphosphate. In vitro, also has a low glucose 1,6-bisphosphate synthase activity which is most probably not physiologically relevant. The chain is Phosphopentomutase from Mus musculus (Mouse).